Consider the following 500-residue polypeptide: MNSFPWLTIIVVLPIFAGSSIFFFPHRGNKVIRWYTICICLLELLLTTYAFCYHFQLDDPLVQLEQDYKWINIFDFHWRLGIDGLSIGPVLLTGFITTLATLAAWPVTRDSRLFHFLMLAMYSGQIGSFSSRDLLLFFIMWELELIPVYLLLSMWGGKKRLYSATKFILYTAGGSIFLLIGVSGMGLYGSNEPTLNFETSANQSYPVALEILLYFGFFIAYAVKLPIIPLHTWLPDTHGEAHYSTCMLLAGILLKMGAYGLVRINMELLPHAHSIFSPWLMIVGTIQIIYAASTSLGQRNLKKRIAYSSVSHMGFTILGISSITDTGLNGAILQMISHGFIGAALFFLAGTSYDRIRLVYLDEMGGIAIPMPKIFTLFSSFSMASLALPGMSGFVAELVVFFGIITSEKFFLMPKILITFVTAIGMILTPIYSLSMLRQIFYGYKQFNVPNSHFFDSGPRELFVSICIFLPVIGIGIYPDFVFSLSVDKVEAILSNYFYR.

The next 14 helical transmembrane spans lie at 4-24 (FPWL…IFFF), 35-55 (YTIC…CYHF), 87-107 (IGPV…AWPV), 113-130 (LFHF…GSFS), 134-154 (LLLF…LLSM), 167-187 (FILY…GMGL), 208-228 (ALEI…LPII), 242-262 (HYST…YGLV), 272-292 (AHSI…IYAA), 305-325 (IAYS…SITD), 330-350 (GAIL…FLAG), 386-406 (LALP…GIIT), 416-436 (ILIT…SLSM), and 463-483 (FVSI…DFVF).

This sequence belongs to the complex I subunit 4 family.

The protein resides in the plastid. It is found in the chloroplast thylakoid membrane. It carries out the reaction a plastoquinone + NADH + (n+1) H(+)(in) = a plastoquinol + NAD(+) + n H(+)(out). The catalysed reaction is a plastoquinone + NADPH + (n+1) H(+)(in) = a plastoquinol + NADP(+) + n H(+)(out). The protein is NAD(P)H-quinone oxidoreductase chain 4, chloroplastic of Nandina domestica (Heavenly bamboo).